Consider the following 111-residue polypeptide: Putative ciliary rootlet coiled-coil protein-like 1 protein (111 aa).

The stretch at 21 to 86 forms a coiled coil; that stretch reads MELELSVTKL…RQAEQEATVA (66 aa).

This sequence belongs to the rootletin family.

This is Putative ciliary rootlet coiled-coil protein-like 1 protein (CROCCP2) from Homo sapiens (Human).